A 412-amino-acid polypeptide reads, in one-letter code: Peptidase T (412 aa).

Residue His-81 coordinates Zn(2+). Asp-83 is an active-site residue. Asp-144 lines the Zn(2+) pocket. The active-site Proton acceptor is Glu-178. Zn(2+) contacts are provided by Glu-179, Asp-201, and His-383.

The protein belongs to the peptidase M20B family. It depends on Zn(2+) as a cofactor.

Its subcellular location is the cytoplasm. It carries out the reaction Release of the N-terminal residue from a tripeptide.. Cleaves the N-terminal amino acid of tripeptides. The protein is Peptidase T of Bacillus cereus (strain ZK / E33L).